The chain runs to 462 residues: ATP synthase subunit beta (462 aa).

152–159 (GGAGVGKT) contributes to the ATP binding site.

This sequence belongs to the ATPase alpha/beta chains family. As to quaternary structure, F-type ATPases have 2 components, CF(1) - the catalytic core - and CF(0) - the membrane proton channel. CF(1) has five subunits: alpha(3), beta(3), gamma(1), delta(1), epsilon(1). CF(0) has three main subunits: a(1), b(2) and c(9-12). The alpha and beta chains form an alternating ring which encloses part of the gamma chain. CF(1) is attached to CF(0) by a central stalk formed by the gamma and epsilon chains, while a peripheral stalk is formed by the delta and b chains.

Its subcellular location is the cell inner membrane. It carries out the reaction ATP + H2O + 4 H(+)(in) = ADP + phosphate + 5 H(+)(out). Produces ATP from ADP in the presence of a proton gradient across the membrane. The catalytic sites are hosted primarily by the beta subunits. The protein is ATP synthase subunit beta of Blochmanniella pennsylvanica (strain BPEN).